We begin with the raw amino-acid sequence, 255 residues long: Hydroxyacylglutathione hydrolase (255 aa).

Zn(2+) contacts are provided by H56, H58, D60, H61, H114, D133, and H171.

The protein belongs to the metallo-beta-lactamase superfamily. Glyoxalase II family. Monomer. Zn(2+) serves as cofactor.

The catalysed reaction is an S-(2-hydroxyacyl)glutathione + H2O = a 2-hydroxy carboxylate + glutathione + H(+). Its pathway is secondary metabolite metabolism; methylglyoxal degradation; (R)-lactate from methylglyoxal: step 2/2. Functionally, thiolesterase that catalyzes the hydrolysis of S-D-lactoyl-glutathione to form glutathione and D-lactic acid. The polypeptide is Hydroxyacylglutathione hydrolase (Bradyrhizobium sp. (strain ORS 278)).